Here is a 554-residue protein sequence, read N- to C-terminus: Glucose-6-phosphate isomerase 2 (554 aa).

The active-site Proton donor is E359. Residues H390 and K518 contribute to the active site.

It belongs to the GPI family.

It is found in the cytoplasm. The enzyme catalyses alpha-D-glucose 6-phosphate = beta-D-fructose 6-phosphate. The protein operates within carbohydrate biosynthesis; gluconeogenesis. It participates in carbohydrate degradation; glycolysis; D-glyceraldehyde 3-phosphate and glycerone phosphate from D-glucose: step 2/4. In terms of biological role, catalyzes the reversible isomerization of glucose-6-phosphate to fructose-6-phosphate. This Pseudomonas putida (strain ATCC 47054 / DSM 6125 / CFBP 8728 / NCIMB 11950 / KT2440) protein is Glucose-6-phosphate isomerase 2.